We begin with the raw amino-acid sequence, 1242 residues long: DNA excision repair protein ERCC-6-like (1242 aa).

Position 14 is a phosphoserine (serine 14). The TPR 1 repeat unit spans residues 21 to 54; sequence YLRYVKEAKEATKNGDLEQALKLFNLAKDIFPNE. A Helicase ATP-binding domain is found at 109 to 277; that stretch reads SLYRDGRRGG…WSLFDFACQG (169 aa). An ATP-binding site is contributed by 122–129; sequence DDMGLGKT. The short motif at 228–231 is the DEAH box element; sequence DEAH. Residues 466–626 form the Helicase C-terminal domain; the sequence is FLMDLLKKLR…PFRYFSKQEL (161 aa). Phosphoserine occurs at positions 755 and 773. Threonine 815 carries the phosphothreonine modification. 4 positions are modified to phosphoserine: serine 963, serine 989, serine 998, and serine 1021. Residue threonine 1055 is modified to Phosphothreonine. Phosphoserine is present on residues serine 1061, serine 1090, and serine 1110. A disordered region spans residues 1103 to 1181; it reads EERLDNSSEA…LSDGQLVDSP (79 aa). Composition is skewed to basic and acidic residues over residues 1105–1121 and 1130–1140; these read RLDN…HLEE and APEHTKEDPSR. Residues 1141–1156 are compositionally biased toward polar residues; the sequence is ETLSSENKSSQLSTSK. Phosphoserine is present on residues serine 1173 and serine 1180. The stretch at 1192-1225 is one TPR 2 repeat; sequence YDTLVLHGKELKECGKIQEALDCLVKALDIKSSD.

Belongs to the SNF2/RAD54 helicase family. In terms of assembly, interacts with PLK1, which phosphorylates it. Both proteins are mutually dependent on each other for correct subcellular localization. Interacts (via N-terminal TPR repeat) with BEND3 (via BEN domains 1 and 3); the interaction is direct. Post-translationally, phosphorylation by PLK1 prevents the association with chromosome arms and restricts its localization to the kinetochore-centromere region.

Its subcellular location is the chromosome. It is found in the centromere. It localises to the kinetochore. The catalysed reaction is ATP + H2O = ADP + phosphate + H(+). DNA helicase that acts as a tension sensor that associates with catenated DNA which is stretched under tension until it is resolved during anaphase. Functions as ATP-dependent DNA translocase. Can promote Holliday junction branch migration (in vitro). The protein is DNA excision repair protein ERCC-6-like (ERCC6L) of Bos taurus (Bovine).